The sequence spans 353 residues: Protein MGF 360-11L (353 aa).

Residues 59-88 form an ANK repeat; it reads ELNTVLMKAAKENNHDLIRLFVEWGADINY.

It belongs to the asfivirus MGF 360 family. In terms of assembly, interacts with host TBK1 ad IRF7.

In terms of biological role, plays a role in virus cell tropism, and may be required for efficient virus replication in macrophages. In addition, inhibits the phosphorylation of host TBK1 and IRF7 and thereby negatively regulates the host cGAS signaling pathway and antagonizes IFN-mediated antiviral activity. This African swine fever virus (isolate Pig/Kenya/KEN-50/1950) (ASFV) protein is Protein MGF 360-11L.